The primary structure comprises 299 residues: UDP-N-acetylenolpyruvoylglucosamine reductase (299 aa).

Residues 31–192 enclose the FAD-binding PCMH-type domain; the sequence is VGGVAEVVFK…VDATFVGACG (162 aa). Residue R172 is part of the active site. Residue S221 is the Proton donor of the active site. Residue E291 is part of the active site.

It belongs to the MurB family. FAD serves as cofactor.

The protein localises to the cytoplasm. The catalysed reaction is UDP-N-acetyl-alpha-D-muramate + NADP(+) = UDP-N-acetyl-3-O-(1-carboxyvinyl)-alpha-D-glucosamine + NADPH + H(+). Its pathway is cell wall biogenesis; peptidoglycan biosynthesis. Functionally, cell wall formation. This chain is UDP-N-acetylenolpyruvoylglucosamine reductase, found in Anaplasma marginale (strain St. Maries).